A 489-amino-acid polypeptide reads, in one-letter code: Rhamnulokinase (489 aa).

ATP is bound at residue 13–17 (ASSGR). Cys-68 and Cys-222 are disulfide-bonded. Substrate-binding positions include Gly-83 and 236-238 (HDT). The active-site Proton acceptor is Asp-237. Thr-259 provides a ligand contact to ATP. Residue Asn-296 coordinates substrate. Residue Gln-304 participates in ATP binding. Cys-353 and Cys-370 are disulfide-bonded. Residue Gly-402 coordinates ATP. Cys-413 and Cys-417 are oxidised to a cystine.

It belongs to the rhamnulokinase family. Mg(2+) serves as cofactor.

The enzyme catalyses L-rhamnulose + ATP = L-rhamnulose 1-phosphate + ADP + H(+). Its pathway is carbohydrate degradation; L-rhamnose degradation; glycerone phosphate from L-rhamnose: step 2/3. Its function is as follows. Involved in the catabolism of L-rhamnose (6-deoxy-L-mannose). Catalyzes the transfer of the gamma-phosphate group from ATP to the 1-hydroxyl group of L-rhamnulose to yield L-rhamnulose 1-phosphate. The polypeptide is Rhamnulokinase (Salmonella typhi).